The following is a 255-amino-acid chain: Homeobox protein Hox-D4 (255 aa).

A disordered region spans residues 31–128; the sequence is EQGADYYGGG…KQPPPGTALK (98 aa). The segment covering 94–109 has biased composition (pro residues); the sequence is EPCPAPPAPPPAPLPG. An Antp-type hexapeptide motif is present at residues 133-138; the sequence is VYPWMK. Residues 154–213 constitute a DNA-binding region (homeobox); that stretch reads PKRSRTAYTRQQVLELEKEFHFNRYLTRRRRIEIAHTLCLSERQIKIWFQNRRMKWKKDH. Residues 212–255 are disordered; the sequence is DHKLPNTKGRSSSSSSSSSCSSSVAPSQHLQPMAKDHHTDLTTL. The span at 222–234 shows a compositional bias: low complexity; sequence SSSSSSSSSCSSS. Residues 245-255 show a composition bias toward basic and acidic residues; sequence AKDHHTDLTTL.

This sequence belongs to the Antp homeobox family. Deformed subfamily. In terms of assembly, forms a DNA-binding heterodimer with transcription factor PBX1.

It is found in the nucleus. In terms of biological role, sequence-specific transcription factor which is part of a developmental regulatory system that provides cells with specific positional identities on the anterior-posterior axis. The polypeptide is Homeobox protein Hox-D4 (HOXD4) (Gorilla gorilla gorilla (Western lowland gorilla)).